Reading from the N-terminus, the 123-residue chain is SPbeta prophage-derived uncharacterized protein YorE (123 aa).

The sequence is that of SPbeta prophage-derived uncharacterized protein YorE (yorE) from Bacillus subtilis (strain 168).